The primary structure comprises 110 residues: NADH-quinone oxidoreductase subunit K (110 aa).

Transmembrane regions (helical) follow at residues 13 to 33 (LNHY…GLFM), 41 to 61 (ILMS…AFSI), and 73 to 93 (IIIL…LLIY).

It belongs to the complex I subunit 4L family. NDH-1 is composed of 14 different subunits. Subunits NuoA, H, J, K, L, M, N constitute the membrane sector of the complex.

It localises to the cell inner membrane. It carries out the reaction a quinone + NADH + 5 H(+)(in) = a quinol + NAD(+) + 4 H(+)(out). In terms of biological role, NDH-1 shuttles electrons from NADH, via FMN and iron-sulfur (Fe-S) centers, to quinones in the respiratory chain. The immediate electron acceptor for the enzyme in this species is believed to be ubiquinone. Couples the redox reaction to proton translocation (for every two electrons transferred, four hydrogen ions are translocated across the cytoplasmic membrane), and thus conserves the redox energy in a proton gradient. The sequence is that of NADH-quinone oxidoreductase subunit K from Rickettsia conorii (strain ATCC VR-613 / Malish 7).